A 269-amino-acid chain; its full sequence is Aquaporin-1 (269 aa).

Residues Met1–Trp11 lie on the Cytoplasmic side of the membrane. A helical transmembrane segment spans residues Arg12 to Ile29. Residues Gly30–Val46 are Extracellular-facing. N-linked (GlcNAc...) asparagine glycosylation occurs at Asn42. Residues Gln47–Gln65 traverse the membrane as a helical segment. Topologically, residues Ser66–Gly68 are cytoplasmic. The stretch at His69–Gly82 is an intramembrane region. Positions Asn76–Ala78 match the NPA 1 motif. Residues Leu83 to Ser90 are Cytoplasmic-facing. Residues Ile91–Ser109 traverse the membrane as a helical segment. The Extracellular segment spans residues Ala110–Val133. A helical transmembrane segment spans residues Asn134–Val153. Residues Leu154–Asp163 are Cytoplasmic-facing. The helical transmembrane segment at Leu164–Leu181 threads the bilayer. At Leu182–Tyr186 the chain is on the extracellular side. Residues Thr187–Ser199 lie within the membrane without spanning it. Residues Asn192–Ala194 carry the NPA 2 motif. Topologically, residues Ala200 to Phe206 are extracellular. Asn205 carries N-linked (GlcNAc...) asparagine glycosylation. A helical transmembrane segment spans residues Ser207–Val224. The Cytoplasmic segment spans residues Leu225–Lys269. At Ser247 the chain carries Phosphoserine. At Tyr253 the chain carries Phosphotyrosine. Ser262 is modified (phosphoserine).

It belongs to the MIP/aquaporin (TC 1.A.8) family. Homotetramer; each monomer provides an independent water pore. Component of the ankyrin-1 complex in the erythrocyte, composed of ANK1, RHCE, RHAG, SLC4A1, EPB42, GYPA, GYPB and AQP1. Interacts with EPHB2; involved in endolymph production in the inner ear. Identified in a complex with STOM. Interacts (via the N-terminal) with ANK1 (via ANK 1-5 repeats). Interacts (via the C-terminal) with EPB42. As to expression, erythrocytes and renal tubules.

The protein localises to the cell membrane. The enzyme catalyses H2O(in) = H2O(out). The catalysed reaction is nitric oxide(out) = nitric oxide(in). It catalyses the reaction CO2(out) = CO2(in). It carries out the reaction glycerol(in) = glycerol(out). The enzyme catalyses H2O2(out) = H2O2(in). The catalysed reaction is K(+)(in) = K(+)(out). It catalyses the reaction Na(+)(in) = Na(+)(out). Functionally, forms a water channel that facilitates the transport of water across cell membranes, playing a crucial role in water homeostasis in various tissues. Could also be permeable to small solutes including hydrogen peroxide, glycerol and gases such as amonnia (NH3), nitric oxide (NO) and carbon dioxide (CO2). Recruited to the ankyrin-1 complex, a multiprotein complex of the erythrocyte membrane, it could be part of a CO2 metabolon, linking facilitated diffusion of CO2 across the membrane, anion exchange of Cl(-)/HCO3(-) and interconversion of dissolved CO2 and carbonic acid in the cytosol. In vitro, it shows non-selective gated cation channel activity and may be permeable to cations like K(+) and Na(+) in vivo. This chain is Aquaporin-1, found in Rattus norvegicus (Rat).